Here is a 354-residue protein sequence, read N- to C-terminus: Protein RecA (354 aa).

Residue 68–75 (GPESSGKT) participates in ATP binding.

The protein belongs to the RecA family.

Its subcellular location is the cytoplasm. In terms of biological role, can catalyze the hydrolysis of ATP in the presence of single-stranded DNA, the ATP-dependent uptake of single-stranded DNA by duplex DNA, and the ATP-dependent hybridization of homologous single-stranded DNAs. It interacts with LexA causing its activation and leading to its autocatalytic cleavage. This chain is Protein RecA, found in Synechocystis sp. (strain ATCC 27184 / PCC 6803 / Kazusa).